The chain runs to 232 residues: (S)-2-haloacid dehalogenase (232 aa).

Aspartate 10 serves as the catalytic Nucleophile. Residues 11–12, arginine 41, and 118–119 each bind an (S)-2-haloacid; these read LY and SN. The important for catalytic activity stretch occupies residues 175–180; it reads SSNAWD.

Belongs to the HAD-like hydrolase superfamily. S-2-haloalkanoic acid dehalogenase family. As to quaternary structure, homodimer.

The enzyme catalyses an (S)-2-haloacid + H2O = a (2R)-2-hydroxycarboxylate + a halide anion + H(+). It catalyses the reaction (S)-2-chloropropanoate + H2O = (R)-lactate + chloride + H(+). In terms of biological role, catalyzes the hydrolytic dehalogenation of small (S)-2-haloalkanoic acids to yield the corresponding (R)-2-hydroxyalkanoic acids. Acts on acids of short chain lengths, C(2) to C(4), with inversion of configuration at C-2. Active with 2-halogenated carboxylic acids and converts only the S-isomer (or L-isomer) of 2-chloropropionic acid with inversion of configuration to produce R-lactate (or D-isomer). The sequence is that of (S)-2-haloacid dehalogenase from Pseudomonas sp. (strain YL).